The primary structure comprises 359 residues: Fructose-bisphosphate aldolase (359 aa).

Ser62 lines the D-glyceraldehyde 3-phosphate pocket. Asp110 serves as the catalytic Proton donor. Residues His111, Asp145, Glu175, and His227 each contribute to the Zn(2+) site. A dihydroxyacetone phosphate-binding site is contributed by Gly228. His265 contacts Zn(2+). Dihydroxyacetone phosphate-binding positions include 266–268 and 287–290; these read GGS and NIDT.

The protein belongs to the class II fructose-bisphosphate aldolase family. In terms of assembly, homodimer. Zn(2+) serves as cofactor.

The enzyme catalyses beta-D-fructose 1,6-bisphosphate = D-glyceraldehyde 3-phosphate + dihydroxyacetone phosphate. It participates in carbohydrate degradation; glycolysis; D-glyceraldehyde 3-phosphate and glycerone phosphate from D-glucose: step 4/4. Its function is as follows. Catalyzes the aldol condensation of dihydroxyacetone phosphate (DHAP or glycerone-phosphate) with glyceraldehyde 3-phosphate (G3P) to form fructose 1,6-bisphosphate (FBP) in gluconeogenesis and the reverse reaction in glycolysis. This chain is Fructose-bisphosphate aldolase (fba), found in Haemophilus influenzae (strain ATCC 51907 / DSM 11121 / KW20 / Rd).